The following is a 156-amino-acid chain: Small ribosomal subunit protein uS7 (156 aa).

It belongs to the universal ribosomal protein uS7 family. Part of the 30S ribosomal subunit. Contacts proteins S9 and S11.

One of the primary rRNA binding proteins, it binds directly to 16S rRNA where it nucleates assembly of the head domain of the 30S subunit. Is located at the subunit interface close to the decoding center, probably blocks exit of the E-site tRNA. The polypeptide is Small ribosomal subunit protein uS7 (Brucella anthropi (strain ATCC 49188 / DSM 6882 / CCUG 24695 / JCM 21032 / LMG 3331 / NBRC 15819 / NCTC 12168 / Alc 37) (Ochrobactrum anthropi)).